The following is a 51-amino-acid chain: Small ribosomal subunit protein eS31 (51 aa).

Zn(2+) contacts are provided by cysteine 21, cysteine 24, cysteine 39, and cysteine 42. Residues 21-42 (CPRCGPGVFLAEHEDRFSCGRC) form a C4-type zinc finger.

This sequence belongs to the eukaryotic ribosomal protein eS31 family. As to quaternary structure, part of the 30S ribosomal subunit. Zn(2+) is required as a cofactor.

The protein is Small ribosomal subunit protein eS31 of Picrophilus torridus (strain ATCC 700027 / DSM 9790 / JCM 10055 / NBRC 100828 / KAW 2/3).